The chain runs to 88 residues: Acyl-CoA-binding domain-containing protein 7 (88 aa).

Residues 3–88 enclose the ACB domain; that stretch reads LQADFDRAAE…AKELIEKYGI (86 aa). Residues R15, 30–34, K56, and Y75 each bind an acyl-CoA; that span reads YGLYK.

Belongs to the ACBD7 family.

Functionally, binds medium- and long-chain acyl-CoA esters. This Homo sapiens (Human) protein is Acyl-CoA-binding domain-containing protein 7 (ACBD7).